The following is a 143-amino-acid chain: MVLSPADKTNVKAAWDKVGGHAGDYGAEALERMFLSFPTTKTYFPHFSDLSHGSAQVKAHGKKVGDALNNAVGHMDDLPTALSALSDLHAHKLRVDPVNFKLLSHCLLVTLACHHPAEFTPAVHASLDKFLANVSTVLVSKYR.

The Globin domain maps to 2–143 (VLSPADKTNV…VSTVLVSKYR (142 aa)). Position 4 is a phosphoserine (S4). Residue K8 is modified to N6-succinyllysine. T9 is modified (phosphothreonine). Position 12 is an N6-succinyllysine (K12). K17 is subject to N6-acetyllysine; alternate. Position 17 is an N6-succinyllysine; alternate (K17). Y25 bears the Phosphotyrosine mark. The residue at position 36 (S36) is a Phosphoserine. K41 carries the post-translational modification N6-succinyllysine. The residue at position 51 (S51) is a Phosphoserine. H60 serves as a coordination point for O2. H89 is a heme b binding site. A Phosphoserine modification is found at S104. T110 bears the Phosphothreonine mark. S126 bears the Phosphoserine mark. T136 is subject to Phosphothreonine. Residue S140 is modified to Phosphoserine.

This sequence belongs to the globin family. As to quaternary structure, heterotetramer of two alpha chains and two beta chains. In terms of tissue distribution, red blood cells.

In terms of biological role, involved in oxygen transport from the lung to the various peripheral tissues. Functionally, hemopressin acts as an antagonist peptide of the cannabinoid receptor CNR1. Hemopressin-binding efficiently blocks cannabinoid receptor CNR1 and subsequent signaling. This chain is Hemoglobin subunit alpha (HBA), found in Pipistrellus abramus (Japanese pipistrelle).